The chain runs to 407 residues: Histone acetyltransferase mst2 (407 aa).

Residues 98 to 372 form the MYST-type HAT domain; the sequence is PQPTSIRYLY…VNPKLLRWTP (275 aa). The segment at 131–156 adopts a C2HC MYST-type zinc-finger fold; it reads LYICESCLKYMNSDHVLQRHKMKCSW. Lys198 is modified (N6-acetyllysine; by autocatalysis). Acetyl-CoA-binding positions include 241–243, Thr243, and 248–254; these read ILT and QRRGYGV. The active-site Proton donor/acceptor is Glu274. Residues Ser278 and Ser287 each contribute to the acetyl-CoA site.

This sequence belongs to the MYST (SAS/MOZ) family. In terms of assembly, component of the mst2 complex composed of at least eaf6, mst2, nto1, pdp3, ptf1, ptf2 and tfg3. Post-translationally, autoacetylation at Lys-198 is required for proper function.

The protein localises to the cytoplasm. It is found in the nucleus. It catalyses the reaction L-lysyl-[protein] + acetyl-CoA = N(6)-acetyl-L-lysyl-[protein] + CoA + H(+). In terms of biological role, component of the mst2 complex which is a highly specific H3 lysine 14 (H3K14) acetyltransferase that functions together with gcn5 to regulate global levels of H3K14 acetylation (H3K14ac), critical for DNA damage checkpoint activation. Negatively regulates telomere silencing. Telomere silencing is increased due to histone hypoacetylation and/or an increase in the ratio of methylated histones to acetylated histones. Telomeric histone acetylation contributes to normal meiotic progression. This Schizosaccharomyces pombe (strain 972 / ATCC 24843) (Fission yeast) protein is Histone acetyltransferase mst2 (mst2).